The sequence spans 116 residues: NADH-ubiquinone oxidoreductase chain 3 (116 aa).

The next 3 membrane-spanning stretches (helical) occupy residues 3-23 (LILA…MIAF), 56-76 (FFLV…LLPL), and 85-105 (PTLA…GLIH).

This sequence belongs to the complex I subunit 3 family.

It is found in the mitochondrion membrane. The catalysed reaction is a ubiquinone + NADH + 5 H(+)(in) = a ubiquinol + NAD(+) + 4 H(+)(out). In terms of biological role, core subunit of the mitochondrial membrane respiratory chain NADH dehydrogenase (Complex I) that is believed to belong to the minimal assembly required for catalysis. Complex I functions in the transfer of electrons from NADH to the respiratory chain. The immediate electron acceptor for the enzyme is believed to be ubiquinone. This chain is NADH-ubiquinone oxidoreductase chain 3 (MT-ND3), found in Latimeria chalumnae (Coelacanth).